We begin with the raw amino-acid sequence, 514 residues long: Contact site A protein (514 aa).

An N-terminal signal peptide occupies residues 1-19; it reads MKFLLVLIILYNILNSAHS. The tract at residues 20–453 is globular; that stretch reads APTITAVSNG…EATTSTTYTI (434 aa). Positions 21–104 constitute an IPT/TIG 1 domain; it reads PTITAVSNGK…TGGNGLFKYT (84 aa). 5 N-linked (GlcNAc...) asparagine glycosylation sites follow: N128, N137, N207, N294, and N399. The IPT/TIG 2 domain occupies 191–283; the sequence is PTITSITPLA…NQQPITFTYN (93 aa). Composition is skewed to low complexity over residues 446–475 and 483–494; these read TTSTTYTIPDTPTPTDTATPSPTPTETATP and STPEETEAPSSA. The disordered stretch occupies residues 446 to 494; sequence TTSTTYTIPDTPTPTDTATPSPTPTETATPSPTPKPTSTPEETEAPSSA. 2 tandem repeats follow at residues 462-469 and 472-479. Positions 462–479 are 2 X 8 AA repeats, Pro-rich; sequence TATPSPTPTETATPSPTP. The GPI-like-anchor amidated serine moiety is linked to residue S492. The propeptide at 493–514 is removed in mature form; it reads SATTLISPLSLIVIFISFVLLI.

Phosphorylated on serine and N-glycosylated with two types of oligosaccharide chains. Post-translationally, the GPI-like-anchor contains a phosphoceramide group, rather than a phosphatidyl group.

It is found in the cell membrane. Its function is as follows. This cell-surface glycoprotein mediates cell-cell binding via homophilic interaction. This chain is Contact site A protein (csaA), found in Dictyostelium discoideum (Social amoeba).